A 475-amino-acid polypeptide reads, in one-letter code: Sulfate adenylyltransferase subunit 1 (475 aa).

In terms of domain architecture, tr-type G spans 25 to 239 (KSLLRFLTCG…EVLETVEIQR (215 aa)). Positions 34–41 (GSVDDGKS) are G1. 34-41 (GSVDDGKS) is a GTP binding site. Residues 92–96 (GITID) form a G2 region. The interval 113–116 (DTPG) is G3. Residues 113-117 (DTPGH) and 168-171 (NKMD) each bind GTP. The segment at 168–171 (NKMD) is G4. The tract at residues 206 to 208 (SAL) is G5.

Belongs to the TRAFAC class translation factor GTPase superfamily. Classic translation factor GTPase family. CysN/NodQ subfamily. Heterodimer composed of CysD, the smaller subunit, and CysN.

The catalysed reaction is sulfate + ATP + H(+) = adenosine 5'-phosphosulfate + diphosphate. Its pathway is sulfur metabolism; hydrogen sulfide biosynthesis; sulfite from sulfate: step 1/3. Functionally, with CysD forms the ATP sulfurylase (ATPS) that catalyzes the adenylation of sulfate producing adenosine 5'-phosphosulfate (APS) and diphosphate, the first enzymatic step in sulfur assimilation pathway. APS synthesis involves the formation of a high-energy phosphoric-sulfuric acid anhydride bond driven by GTP hydrolysis by CysN coupled to ATP hydrolysis by CysD. The chain is Sulfate adenylyltransferase subunit 1 from Citrobacter koseri (strain ATCC BAA-895 / CDC 4225-83 / SGSC4696).